A 123-amino-acid chain; its full sequence is Small ribosomal subunit protein uS12 (123 aa).

Asp-89 is subject to 3-methylthioaspartic acid. The tract at residues 100–123 (GSLDTSGVKDRKQGRSKYGAKRPK) is disordered. Residues 113–123 (GRSKYGAKRPK) show a composition bias toward basic residues.

This sequence belongs to the universal ribosomal protein uS12 family. In terms of assembly, part of the 30S ribosomal subunit. Contacts proteins S8 and S17. May interact with IF1 in the 30S initiation complex.

Functionally, with S4 and S5 plays an important role in translational accuracy. Interacts with and stabilizes bases of the 16S rRNA that are involved in tRNA selection in the A site and with the mRNA backbone. Located at the interface of the 30S and 50S subunits, it traverses the body of the 30S subunit contacting proteins on the other side and probably holding the rRNA structure together. The combined cluster of proteins S8, S12 and S17 appears to hold together the shoulder and platform of the 30S subunit. In Pseudomonas aeruginosa (strain LESB58), this protein is Small ribosomal subunit protein uS12.